Reading from the N-terminus, the 231-residue chain is Large ribosomal subunit protein uL1 (231 aa).

Belongs to the universal ribosomal protein uL1 family. In terms of assembly, part of the 50S ribosomal subunit.

In terms of biological role, binds directly to 23S rRNA. The L1 stalk is quite mobile in the ribosome, and is involved in E site tRNA release. Protein L1 is also a translational repressor protein, it controls the translation of the L11 operon by binding to its mRNA. This chain is Large ribosomal subunit protein uL1, found in Saccharophagus degradans (strain 2-40 / ATCC 43961 / DSM 17024).